The primary structure comprises 257 residues: NAD-capped RNA hydrolase NudC (257 aa).

Arg69 serves as a coordination point for substrate. Zn(2+) contacts are provided by Cys98 and Cys101. Position 111 (Glu111) interacts with substrate. Cys116 and Cys119 together coordinate Zn(2+). Tyr124 is a substrate binding site. The Nudix hydrolase domain maps to 125-248; it reads PQIAPCIIVA…TVARRLIEDT (124 aa). A divalent metal cation-binding residues include Ala158, Glu174, and Glu178. The short motif at 159-180 is the Nudix box element; sequence GFVEVGETLEQAVAREVMEESG. A substrate-binding site is contributed by 192–199; sequence QPWPFPQS. Position 219 (Glu219) interacts with a divalent metal cation. Ala241 contributes to the substrate binding site.

Belongs to the Nudix hydrolase family. NudC subfamily. Homodimer. Requires Mg(2+) as cofactor. Mn(2+) serves as cofactor. Zn(2+) is required as a cofactor.

The catalysed reaction is a 5'-end NAD(+)-phospho-ribonucleoside in mRNA + H2O = a 5'-end phospho-adenosine-phospho-ribonucleoside in mRNA + beta-nicotinamide D-ribonucleotide + 2 H(+). It carries out the reaction NAD(+) + H2O = beta-nicotinamide D-ribonucleotide + AMP + 2 H(+). The enzyme catalyses NADH + H2O = reduced beta-nicotinamide D-ribonucleotide + AMP + 2 H(+). In terms of biological role, mRNA decapping enzyme that specifically removes the nicotinamide adenine dinucleotide (NAD) cap from a subset of mRNAs by hydrolyzing the diphosphate linkage to produce nicotinamide mononucleotide (NMN) and 5' monophosphate mRNA. The NAD-cap is present at the 5'-end of some mRNAs and stabilizes RNA against 5'-processing. Has preference for mRNAs with a 5'-end purine. Catalyzes the hydrolysis of a broad range of dinucleotide pyrophosphates. This Citrobacter koseri (strain ATCC BAA-895 / CDC 4225-83 / SGSC4696) protein is NAD-capped RNA hydrolase NudC.